A 361-amino-acid polypeptide reads, in one-letter code: Chorismate synthase (361 aa).

NADP(+) contacts are provided by R48 and R54. FMN contacts are provided by residues 125–127 (RSS), 238–239 (NA), G278, 293–297 (KPTSS), and R319.

This sequence belongs to the chorismate synthase family. Homotetramer. The cofactor is FMNH2.

The catalysed reaction is 5-O-(1-carboxyvinyl)-3-phosphoshikimate = chorismate + phosphate. The protein operates within metabolic intermediate biosynthesis; chorismate biosynthesis; chorismate from D-erythrose 4-phosphate and phosphoenolpyruvate: step 7/7. Catalyzes the anti-1,4-elimination of the C-3 phosphate and the C-6 proR hydrogen from 5-enolpyruvylshikimate-3-phosphate (EPSP) to yield chorismate, which is the branch point compound that serves as the starting substrate for the three terminal pathways of aromatic amino acid biosynthesis. This reaction introduces a second double bond into the aromatic ring system. This is Chorismate synthase from Salmonella paratyphi A (strain ATCC 9150 / SARB42).